The primary structure comprises 251 residues: Protein CMS1 (251 aa).

Residues 1–37 (MSLDNDINTKKRKLQDDEKPRKKRKHKRPTRDDDADL) form a disordered region.

The protein belongs to the CMS1 family.

It localises to the nucleus. Functionally, may play a role in the regulation of DNA replication and cell cycle control. This Chaetomium thermophilum (strain DSM 1495 / CBS 144.50 / IMI 039719) (Thermochaetoides thermophila) protein is Protein CMS1 (CSM1).